Consider the following 338-residue polypeptide: Methionine import ATP-binding protein MetN 2 (338 aa).

The ABC transporter domain occupies Ile2–Val242. Residue Gly39–Ser46 participates in ATP binding.

It belongs to the ABC transporter superfamily. Methionine importer (TC 3.A.1.24) family. The complex is composed of two ATP-binding proteins (MetN), two transmembrane proteins (MetI) and a solute-binding protein (MetQ).

It is found in the cell inner membrane. The enzyme catalyses L-methionine(out) + ATP + H2O = L-methionine(in) + ADP + phosphate + H(+). It catalyses the reaction D-methionine(out) + ATP + H2O = D-methionine(in) + ADP + phosphate + H(+). Its function is as follows. Part of the ABC transporter complex MetNIQ involved in methionine import. Responsible for energy coupling to the transport system. The protein is Methionine import ATP-binding protein MetN 2 of Salmonella choleraesuis (strain SC-B67).